We begin with the raw amino-acid sequence, 757 residues long: Alcohol dehydrogenase (quinone), dehydrogenase subunit (757 aa).

A signal peptide spans 1–34 (MTSGLLTPIKVTKKRLLSCAAALAFSAAVPVAFA). At Gln-35 the chain carries Pyrrolidone carboxylic acid. Glu-95 contacts pyrroloquinoline quinone. Cys-141 and Cys-142 form a disulfide bridge. Arg-147 provides a ligand contact to pyrroloquinoline quinone. Position 215 (Glu-215) interacts with Ca(2+). Residue Thr-277 coordinates pyrroloquinoline quinone. Residues Asn-297 and Asp-342 each contribute to the Ca(2+) site. Asp-342 (proton acceptor) is an active-site residue. Residues Lys-369 and Ile-588 each contribute to the pyrroloquinoline quinone site. Residues 640–719 (ARQKDGYFMY…DIRNFIVKRA (80 aa)) enclose the Cytochrome c domain. 4 residues coordinate heme c: Cys-653, Cys-656, His-657, and Met-696. A disordered region spans residues 726–757 (EVKARENSTGVPNDQFLNVPQSTADVPTADHP). Residues 732 to 750 (NSTGVPNDQFLNVPQSTAD) are compositionally biased toward polar residues.

The protein belongs to the bacterial PQQ dehydrogenase family. As to quaternary structure, the alcohol dehydrogenase multicomponent enzyme system is composed of a dehydrogenase subunit I (AdhA), a cytochrome c subunit II (AdhB) and a subunit III (AdhS). Pyrroloquinoline quinone serves as cofactor. Requires Ca(2+) as cofactor. It depends on heme c as a cofactor.

It localises to the cell membrane. The enzyme catalyses ethanol + a ubiquinone = a ubiquinol + acetaldehyde. With respect to regulation, 2,6-dichloro-4-dicyanovinylphenol (PC16) and antimycin A inhibit ubiquinol oxidation activity more selectively than the ubiquinone reductase activity. Its function is as follows. Dehydrogenase component of the alcohol dehydrogenase multicomponent enzyme system which is involved in the production of acetic acid and in the ethanol oxidase respiratory chain. Quinohemoprotein alcohol dehydrogenase (ADH) catalyzes the oxidation of ethanol to acetaldehyde by transferring electrons to the ubiquinone embedded in the membrane phospholipids. The electrons transfer from ethanol to membranous ubiquinone occurs from pyrroloquinoline quinone (PQQ) to one heme c in subunit I (AdhA), and finally to two heme c in subunit II (AdhB). Besides ubiquinone reduction, ADH also has a ubiquinol (QH2) oxidation reaction which mediates electron transfer from ubiquinol to the non-energy generating bypass oxidase system. The electrons transfer occurs from ubiquinol (QH2) to the additional heme c within subunit II (AdhB). Also able to use quinone analogs such as 2,3-dimethoxy-5-methyl-6-n-decyl-1,4-benzoquinone (DB) and 2,3-dimethoxy-5-methyl-6-n-pentyl-1,4-benzoquinone (PB). The chain is Alcohol dehydrogenase (quinone), dehydrogenase subunit from Gluconobacter oxydans (strain 621H) (Gluconobacter suboxydans).